Reading from the N-terminus, the 195-residue chain is Thymidine kinase (195 aa).

Residues 15-22 (GSMFSGKS) and 88-91 (DEVQ) contribute to the ATP site. Residue E89 is the Proton acceptor of the active site. The Zn(2+) site is built by C145, C148, C183, and X186.

Belongs to the thymidine kinase family. Homotetramer.

It localises to the cytoplasm. It catalyses the reaction thymidine + ATP = dTMP + ADP + H(+). The chain is Thymidine kinase from Bacillus cereus (strain ATCC 10987 / NRS 248).